We begin with the raw amino-acid sequence, 150 residues long: D-galactose-binding lectin (150 aa).

D-galactose-binding residues include H16 and G19. Residue N26 is glycosylated (N-linked (GlcNAc...) asparagine). D-galactose is bound by residues 35-37 (DIH), H64, and G67. A glycan (N-linked (GlcNAc...) asparagine) is linked at N74. D-galactose-binding positions include 83-85 (DRH), H108, and G111. An N-linked (GlcNAc...) asparagine glycan is attached at N118. A D-galactose-binding site is contributed by 127–129 (DEH).

As to quaternary structure, oligomerizes in solution. In terms of processing, the N-terminus is blocked. In terms of tissue distribution, expressed in mantle. Expressed 51 and 1.6 fold in mantle and gonads, respectively, relative to that in hemocytes. Expressed at a much lower level in other tissues tested including gill, muscle and hepatopancreas.

Hemagglutinating activity does not require Ca(2+) ions. Hemagglutinating activity is inhibited by porcine stomach mucin (PSM), bovine submaxillary mucin (BSM) and fetuin. Agglutination of V.proteolyticus bacteria is inhibited by D-galactose, but not by D-glucose. Fungal binding is inhibited by D-galactose, but not by pathogen-associated molecular patterns (PAMPs) including lipopolysaccharide (LPS), peptidoglycan and beta-glucan. Its function is as follows. D-galactose-binding lectin. Binds both alpha and beta anomer of galactose (Gal). Binds strongly to branched beta-Gal-terminated glycans and weakly to unbranched glycans with alpha-Gal on the end of chains. Has strong affinity for both Gal and GalNAc. Binds glycoproteins containing mucin-type chains. Has hemagglutinating activity towards human group A erythrocytes. Has hemagglutinating activity towards rabbit erythrocytes. Agglutinates V.proteolyticus bacteria. Binds strongly to fungi including species from genera Aspergillus, Alternaria, Fusarium and Haematonectria, and to a lesser extent to fungi from genera Trichoderma. Decreases conidia germination and hyphal growth of fungi. At high concentration, stimulates secretion of cytokines TNF-alpha and IFN-gamma from human peripheral blood cells, and at low concentration reduces hyperexpression of cytokine IL-10 in these cells, indicative of immunomodulatory capability. However, has no effect on IL-4 production. Recognizes pathogen-associated molecular patterns (PAMPs) and binds to peptidoglycan from S.aureus, but has only little binding to beta-1,3-glucan from E.gracilis and lipopolysaccharide (LPS) from E.coli. May be involved in innate immunity acting as an antibacterial or antifungal agent recognizing carbohydrate ligands on the surface of pathogens. The sequence is that of D-galactose-binding lectin from Mytilus trossulus (Blue mussel).